Consider the following 155-residue polypeptide: GALDGSWKEATLPQVKAMLQKDTGKASGDTVTYSGKTVHVVAAAVLPGFPFPSFEVHDKKNPTLDIPAGATVDVTFINTNKGFGHSFDITKKGPPFAVMPNIKPIVAGTGFSPVPKDGKFGYSEFTWHPTAGTYYYVCQIPGHAATGMFGKIIVK.

The Plastocyanin-like domain occupies 53–155 (SFEVHDKKNP…TGMFGKIIVK (103 aa)). Cu cation-binding residues include His85, Cys138, His143, and Met148.

In terms of assembly, monomer. Cu cation serves as cofactor.

It is found in the periplasm. In terms of biological role, electron carrier from cytochrome c552 to the A-type oxidase. The sequence is that of Rusticyanin (rus) from Acidithiobacillus ferrooxidans (Thiobacillus ferrooxidans).